We begin with the raw amino-acid sequence, 122 residues long: ATP synthase epsilon chain (122 aa).

Belongs to the ATPase epsilon chain family. F-type ATPases have 2 components, CF(1) - the catalytic core - and CF(0) - the membrane proton channel. CF(1) has five subunits: alpha(3), beta(3), gamma(1), delta(1), epsilon(1). CF(0) has three main subunits: a, b and c.

Its subcellular location is the cell membrane. In terms of biological role, produces ATP from ADP in the presence of a proton gradient across the membrane. This Rhodococcus erythropolis (strain PR4 / NBRC 100887) protein is ATP synthase epsilon chain.